The primary structure comprises 217 residues: MEIERINEDTIKFYISYLDLEERGFNQEDVWYDREKSEELFWDMMDELKYEEEFSPEGPLWIQVQALKHGLEVFVTKATIGGKGEDGFDVTLSSPDELAEEKIEKLLEENFNPVKKESLGEDDTLEFILEFRDFEDVISLSRATGLENLLTKLYSYQGKYYLNVEFPENKYDESNIDNAVSILLEYGLESNLTGYMLAEYGKVIFDVPALQQVRKHF.

The protein belongs to the MecA family. In terms of assembly, homodimer.

Its function is as follows. Enables the recognition and targeting of unfolded and aggregated proteins to the ClpC protease or to other proteins involved in proteolysis. This Listeria welshimeri serovar 6b (strain ATCC 35897 / DSM 20650 / CCUG 15529 / CIP 8149 / NCTC 11857 / SLCC 5334 / V8) protein is Adapter protein MecA.